The primary structure comprises 766 residues: Sucrose synthase (766 aa).

Residues 220–698 (MVFNVVILSV…GLLRIKERYT (479 aa)) form a GT-B glycosyltransferase region.

This sequence belongs to the glycosyltransferase 1 family. Plant sucrose synthase subfamily. As to expression, expressed most predominantly in tap root.

The enzyme catalyses an NDP-alpha-D-glucose + D-fructose = a ribonucleoside 5'-diphosphate + sucrose + H(+). Its function is as follows. Sucrose-cleaving enzyme that provides UDP-glucose and fructose for various metabolic pathways. This is Sucrose synthase (SS1) from Beta vulgaris (Sugar beet).